The chain runs to 332 residues: Ketol-acid reductoisomerase (NADP(+)) (332 aa).

The KARI N-terminal Rossmann domain maps to 1–182 (MAQVWKDAEI…GSARAGLIKT (182 aa)). Residues 25–28 (YGIQ), lysine 48, serine 53, and 83–86 (DMIQ) contribute to the NADP(+) site. The active site involves histidine 108. Glycine 134 contacts NADP(+). Positions 183-329 (TFKEEVETDW…RKMRKMMWPD (147 aa)) constitute a KARI C-terminal knotted domain. Mg(2+)-binding residues include aspartate 191, glutamate 195, glutamate 227, and glutamate 231. Serine 252 is a binding site for substrate.

It belongs to the ketol-acid reductoisomerase family. It depends on Mg(2+) as a cofactor.

It catalyses the reaction (2R)-2,3-dihydroxy-3-methylbutanoate + NADP(+) = (2S)-2-acetolactate + NADPH + H(+). It carries out the reaction (2R,3R)-2,3-dihydroxy-3-methylpentanoate + NADP(+) = (S)-2-ethyl-2-hydroxy-3-oxobutanoate + NADPH + H(+). It participates in amino-acid biosynthesis; L-isoleucine biosynthesis; L-isoleucine from 2-oxobutanoate: step 2/4. The protein operates within amino-acid biosynthesis; L-valine biosynthesis; L-valine from pyruvate: step 2/4. Involved in the biosynthesis of branched-chain amino acids (BCAA). Catalyzes an alkyl-migration followed by a ketol-acid reduction of (S)-2-acetolactate (S2AL) to yield (R)-2,3-dihydroxy-isovalerate. In the isomerase reaction, S2AL is rearranged via a Mg-dependent methyl migration to produce 3-hydroxy-3-methyl-2-ketobutyrate (HMKB). In the reductase reaction, this 2-ketoacid undergoes a metal-dependent reduction by NADPH to yield (R)-2,3-dihydroxy-isovalerate. The polypeptide is Ketol-acid reductoisomerase (NADP(+)) (Cenarchaeum symbiosum (strain A)).